A 98-amino-acid polypeptide reads, in one-letter code: Small ribosomal subunit protein bS6 (98 aa).

The protein belongs to the bacterial ribosomal protein bS6 family.

Its function is as follows. Binds together with bS18 to 16S ribosomal RNA. The chain is Small ribosomal subunit protein bS6 from Lactobacillus johnsonii (strain CNCM I-12250 / La1 / NCC 533).